Here is a 77-residue protein sequence, read N- to C-terminus: Pollen allergen Amb p 5b (77 aa).

A signal peptide spans 1-22 (MNNEKNVSFEFIGSTNEVDEIK). Cystine bridges form between Cys26–Cys61, Cys33–Cys48, and Cys40–Cys54.

Its subcellular location is the secreted. This is Pollen allergen Amb p 5b from Ambrosia psilostachya (Western ragweed).